We begin with the raw amino-acid sequence, 146 residues long: Holo-[acyl-carrier-protein] synthase (146 aa).

Mg(2+)-binding residues include aspartate 8 and glutamate 61.

It belongs to the P-Pant transferase superfamily. AcpS family. The cofactor is Mg(2+).

The protein resides in the cytoplasm. The catalysed reaction is apo-[ACP] + CoA = holo-[ACP] + adenosine 3',5'-bisphosphate + H(+). Its function is as follows. Transfers the 4'-phosphopantetheine moiety from coenzyme A to a Ser of acyl-carrier-protein. This Rhodopseudomonas palustris (strain TIE-1) protein is Holo-[acyl-carrier-protein] synthase.